The sequence spans 1641 residues: Cortactin-binding protein 2 (1641 aa).

Positions 1 to 27 (MATDGASCEPDFSRAPEDAAGAPAEAA) are disordered. Residues 119 to 276 (RKMQERMSTQ…EQLKRGNDSK (158 aa)) adopt a coiled-coil conformation. Disordered regions lie at residues 361-433 (SHGD…HPGL), 446-472 (GSNA…PTSR), and 488-588 (ALSR…PQGN). A compositionally biased stretch (polar residues) spans 385–405 (GPSTGSTPDLTSSPTALPSTV). Position 491 is an asymmetric dimethylarginine (Arg-491). Residues 497 to 506 (AGAPPRPGAP) show a composition bias toward pro residues. Positions 576 to 586 (TVASSPSSLPQ) are enriched in polar residues. ANK repeat units lie at residues 702 to 732 (GRPT…DINY), 736 to 765 (DGHS…QVNA), 769 to 798 (NGFT…NINH), 802 to 831 (GGQT…DRSV), 835 to 864 (DGWT…PAHG), and 903 to 933 (EGWT…EPER). A disordered region spans residues 1442 to 1468 (AWRKVSTSPRKKSGRFSSPTWNKPDLS). Ser-1512 carries the post-translational modification Phosphoserine. The interval 1544–1641 (LRRFDSSGNN…NSRDLEPTQK (98 aa)) is disordered. Polar residues-rich tracts occupy residues 1551–1562 (GNNPVFSATVNN) and 1570–1579 (KEVSPLSSHQ). A compositionally biased stretch (basic and acidic residues) spans 1580–1590 (MTERSNSKSKT). Low complexity predominate over residues 1612–1626 (SQNTKRSSSSSNTRQ).

As to quaternary structure, interacts with CTTN/cortactin SH3 domain. Interacts with STRN, STRN4/zinedin and MOB4/phocein; this interactions mediate the association with the STRIPAK core complex and may regulate dendritic spine distribution of the STRIPAK complex in hippocampal neurons. Activation of glutamate receptors weakens the interaction with STRN and STRN4.

The protein localises to the cytoplasm. It localises to the cell cortex. Its subcellular location is the cell projection. The protein resides in the dendritic spine. Regulates the dendritic spine distribution of CTTN/cortactin in hippocampal neurons, and thus controls dendritic spinogenesis and dendritic spine maintenance. Associates with the striatin-interacting phosphatase and kinase (STRIPAK) core complex to regulate dendritic spine distribution of the STRIPAK complex in hippocampal neurons. In Ovis aries (Sheep), this protein is Cortactin-binding protein 2 (CTTNBP2).